The primary structure comprises 610 residues: UvrABC system protein C (610 aa).

The 79-residue stretch at 16–94 (SQPGVYRMYD…IKLYQPRYNV (79 aa)) folds into the GIY-YIG domain. The 36-residue stretch at 204–239 (DQVLTQLISRMETASQNLEFEEAARIRDQIQAVRRV) folds into the UVR domain.

The protein belongs to the UvrC family. As to quaternary structure, interacts with UvrB in an incision complex.

Its subcellular location is the cytoplasm. The UvrABC repair system catalyzes the recognition and processing of DNA lesions. UvrC both incises the 5' and 3' sides of the lesion. The N-terminal half is responsible for the 3' incision and the C-terminal half is responsible for the 5' incision. This is UvrABC system protein C from Shigella boydii serotype 18 (strain CDC 3083-94 / BS512).